Reading from the N-terminus, the 337-residue chain is Transaldolase (337 aa).

The Nuclear localization signal signature appears at 1 to 10 (MSGSPVKRQR). Residue K142 is the Schiff-base intermediate with substrate of the active site. K219 is subject to N6-acetyllysine. A phosphoserine mark is found at S237 and S256. N6-acetyllysine occurs at positions 269, 286, and 321.

It belongs to the transaldolase family. Type 1 subfamily. Homodimer. Interacts with KPNA1 and KPNA4.

The protein resides in the nucleus. Its subcellular location is the cytoplasm. The catalysed reaction is D-sedoheptulose 7-phosphate + D-glyceraldehyde 3-phosphate = D-erythrose 4-phosphate + beta-D-fructose 6-phosphate. The protein operates within carbohydrate degradation; pentose phosphate pathway; D-glyceraldehyde 3-phosphate and beta-D-fructose 6-phosphate from D-ribose 5-phosphate and D-xylulose 5-phosphate (non-oxidative stage): step 2/3. In terms of biological role, catalyzes the rate-limiting step of the non-oxidative phase in the pentose phosphate pathway. Catalyzes the reversible conversion of sedheptulose-7-phosphate and D-glyceraldehyde 3-phosphate into erythrose-4-phosphate and beta-D-fructose 6-phosphate. In Sus scrofa (Pig), this protein is Transaldolase (TALDO1).